The following is a 183-amino-acid chain: Translation initiation factor IF-3 (183 aa).

Belongs to the IF-3 family. Monomer.

Its subcellular location is the cytoplasm. Functionally, IF-3 binds to the 30S ribosomal subunit and shifts the equilibrium between 70S ribosomes and their 50S and 30S subunits in favor of the free subunits, thus enhancing the availability of 30S subunits on which protein synthesis initiation begins. The protein is Translation initiation factor IF-3 of Yersinia pseudotuberculosis serotype O:1b (strain IP 31758).